Reading from the N-terminus, the 261-residue chain is Calbindin (261 aa).

N-acetylalanine is present on A2. The tract at residues 2–7 is interaction with RANBP9; that stretch reads AESHLQ. EF-hand domains follow at residues 11–46, 53–88, 98–133, 142–177, and 186–221; these read ITAS…LQQA, ELSP…EENF, KSCE…LLEK, KLAE…QENF, and MCGK…LCEK. Ca(2+) contacts are provided by D24, D26, S28, Y30, and E35. Residues D111, D113, E122, D155, N157, D159, K161, E166, D199, D201, N203, Y205, and E210 each coordinate Ca(2+).

Belongs to the calbindin family. As to quaternary structure, interacts with RANBP9.

Buffers cytosolic calcium. May stimulate a membrane Ca(2+)-ATPase and a 3',5'-cyclic nucleotide phosphodiesterase. The chain is Calbindin (CALB1) from Pongo abelii (Sumatran orangutan).